Consider the following 712-residue polypeptide: Lactoperoxidase (712 aa).

A signal peptide spans 1-21 (MLVCLHLQVFLASVALFEVAA). Residues 22–117 (SDTIAQAAST…TDPSLDLTAL (96 aa)) constitute a propeptide that is removed on maturation. Asn106 is a glycosylation site (N-linked (GlcNAc...) (complex) asparagine; alternate). Asn106 carries an N-linked (GlcNAc...) (hybrid) asparagine; alternate glycan. Intrachain disulfides connect Cys123–Cys284, Cys132–Cys145, Cys246–Cys256, and Cys250–Cys274. An N-linked (GlcNAc...) (complex) asparagine; alternate glycan is attached at Asn212. N-linked (GlcNAc...) (hybrid) asparagine; alternate glycosylation is present at Asn212. Asp225 serves as a coordination point for heme b. Residue His226 is the Proton acceptor of the active site. Asp227 is a Ca(2+) binding site. 4 residues coordinate Ca(2+): Thr301, Phe303, Asp305, and Ser307. A Phosphoserine modification is found at Ser315. Asn322 carries N-linked (GlcNAc...) (high mannose) asparagine glycosylation. Cys354 and Cys365 are disulfide-bonded. Asn358 carries N-linked (GlcNAc...) asparagine glycosylation. A heme b-binding site is contributed by Glu375. N-linked (GlcNAc...) (complex) asparagine; alternate glycosylation occurs at Asn449. Asn449 carries an N-linked (GlcNAc...) (hybrid) asparagine; alternate glycan. An N-linked (GlcNAc...) (high mannose) asparagine; alternate glycan is attached at Asn449. His468 is a heme b binding site. Tyr482 carries the 3'-nitrotyrosine modification. Intrachain disulfides connect Cys573–Cys630 and Cys671–Cys696.

This sequence belongs to the peroxidase family. XPO subfamily. Ca(2+) is required as a cofactor. The cofactor is heme b. Mammary gland; milk.

The protein localises to the secreted. It localises to the cytoplasm. It carries out the reaction 2 a phenolic donor + H2O2 = 2 a phenolic radical donor + 2 H2O. The catalysed reaction is thiocyanate + H2O2 + H(+) = hypothiocyanous acid + H2O. It catalyses the reaction iodide + H2O2 = hypoiodite + H2O. With respect to regulation, inhibited by small molecule methimazole (MMZ). Functionally, heme-containing oxidoreductase which catalyzes the conversion of thiocyanate (SCN(-)) into antimicrobial agent hypothiocyanous acid (OSCN(-)) in the presence of hydrogen peroxide (H2O2). Also involved in the conversion of iodide (I(-)) into hypoiodite (IO(-)) in the presence of H2O2. Responsible for the inactivation of a wide range of micro-organisms and hence, important component of defense mechanism. Shows antibacterial properties against several Gram-positive bacteria including some Staphylococcus species and Gram-negative bacteria including E.coli, P.aeruginosa and some Salmonella species. Inhibits the growth of several fungi including A.niger, Trichoderma species, C.cassicola, P.meadii and C.salmonicolor. Does not have anti-fungal activity towards C.albicans and Pythium species. May protect the udder from infection and may promote growth in newborns. May be implicated in airway host defense against infection. May contribute to maintaining an appropriate H2O2 cellular level, therefore protecting cells from H2O2-caused injuries and inflammation. This chain is Lactoperoxidase (LPO), found in Capra hircus (Goat).